The primary structure comprises 390 residues: uncharacterized protein (390 aa).

A run of 11 helical transmembrane segments spans residues 7–27, 35–55, 77–97, 101–121, 128–148, 161–181, 203–223, 238–258, 281–301, 335–355, and 357–377; these read IYILAIVSFLVGTSEYIISGI, LGITLAAAGQLITIFSLVYAL, LGLFVFGNVLAFVLPGYGWFI, IIMAMGAGVVVVTALTIAAKI, GSAIATVVMGFTASLIIGVPL, VFGAIALLGLIAMVVIFFTLP, VAMGLSITFFWLGGYSVAYTY, LLSGVLLIFGIASLVGSKFGG, LILLSLVTHSYIGVLVILILW, MQFAMAVGAGIGGVFVENVSL, and SITWVGALGVMIAIIASLLIF.

This sequence belongs to the major facilitator superfamily.

Its subcellular location is the cell membrane. This is an uncharacterized protein from Bacillus subtilis (strain 168).